The sequence spans 593 residues: Regulatory protein NPR1 (593 aa).

Phosphoserine is present on residues Ser11, Ser15, Ser55, and Ser59. The 80-residue stretch at 65–144 (SDAKLVLSDG…VYSSRVRPPP (80 aa)) folds into the BTB domain. A C2HC NPR-type zinc finger spans residues 147-161 (VSECADENCCHVACR). Residues Cys150 and Cys155 each coordinate Zn(2+). An S-nitrosocysteine modification is found at Cys156. Zn(2+)-binding residues include His157 and Cys160. ANK repeat units lie at residues 229–258 (KSNVDMVSLEKSLPEELVKEIIDRRKELGL), 265–295 (KHVSNVHKALDSDDIELVKLLLKEDHTNLDD), 297–324 (CALHFAVAYCNVKTATDLLKLDLADVNH), 328–357 (RGYTVLHVAAMRKEPQLILSLLEKGASASE), and 361–397 (EGRTALMIAKQATMAVECNNIPEQCKHSLKGRLCVEI). An SIM3, required fo binding to SUMO3 and subsequent sumoylation motif is present at residues 345–348 (ILSL). The interval 387-525 (HSLKGRLCVE…DQIMNCEDLT (139 aa)) is salicylic acid-binding core (SBC). Arg432 serves as a coordination point for salicylate. Positions 537–554 (KRLQKKQRYMEIQETLKK) match the Nuclear localization signal motif. The disordered stretch occupies residues 563–593 (LGNSSLTDSTSSTSKSTGGKRSNRKLSHRRR). Over residues 566–579 (SSLTDSTSSTSKST) the composition is skewed to low complexity. The span at 583–593 (RSNRKLSHRRR) shows a compositional bias: basic residues.

It belongs to the plant 'ANKYRIN-BTB/POZ' family. 'NPR1-like' subfamily. As to quaternary structure, homodimer. Oligomer of dimers in an uninduced quiescent state; disulfide-linked. Forms activated (i.e. sumoylated) homodimers and monomers upon systemic acquired resistance (SAR) induction. Interacts with TGA1, TGA3, TGA4, TGA5, TGA6, TGA7 and with reduced forms of TGA1 and TGA4. Activated homodimer binds two TGA3 dimers in the presence of DNA via its ANK 2 repeat (265-295), thus forming a TGA3(2)-NPR1(2)-TGA3(2) complex in which NPR1 serves as a transcription cofactor by bridging two transcription factor complexes in an enhanceosome. Interacts with NIMIN-1 and NIMIN-3 via its C-terminal region, and with NIMIN-2 via its N-terminal region. Interacts with SUMO3 but not with SUMO1 and SUMO2; this interaction is required for phosphorylation at Ser-11 and Ser-15, and triggers activation by sumoylation and subsequent degradation. Binds to NPR3 and NPR4; these interactions are promoted by association of salicylic acid (SA) with NPR3, but disrupted by SA association with NPR4, probably due to conformational changes. Binds to CUL3A, a core component of the cullin-RING ubiquitin ligases (CRL); this interaction requires NPR3 and NPR4. Interacts with NPR2 independently of SA. Binds to WRKY70 when unmodified (i.e. not sumoylated). Phosphorylation at Ser-55 and Ser-59 prevents sumoylation to ensure stability and quiescence. Post-translationally, phosphorylated at Ser-11 and Ser-15 in the nucleus; facilitates its recruitment to a cullin3-based ubiquitin ligase leading to polyubiquitination and subsequent CUL3/CSN-mediated degradation. This phosphorylation at Ser-11 and Ser-15 requires interaction with SUMO3, and promotes in turn activation by sumoylation and subsequent degradation. In terms of processing, ubiquitinated. Sumoylated by SUMO3 independently of an E3 ligase to activate defense gene expression by switching from association with WRKY transcriptional repressors (e.g. WRKY70) to TGA transcriptional activators (e.g. TGA3). Sumoylation is inhibited by phosphorylation at Ser-55 and Ser-59, but seems to promote phosphorylation at Ser-11 and Ser-15. Sumoylation also triggers degradation, making immune induction transient. Post-translationally, the Cys-82-SH group reacts with Cys-216-SH of the other subunit to form an intermolecular disulfide. This disulfide might subsequently be reduced upon systemic acquired resistance (SAR) induction. In terms of processing, S-nitrosylation at Cys-156 facilitates its oligomerization.

Its subcellular location is the cytoplasm. The protein resides in the nucleus. It localises to the nuclear body. It functions in the pathway protein modification; protein ubiquitination. Its function is as follows. Salicylic acid (SA)-binding substrate-specific adapter of an E3 ubiquitin-protein ligase complex (CUL3-RBX1-BTB) which mediates the ubiquitination and subsequent proteasomal degradation of target proteins. Transcription cofactor that represses gene expression in the absence of salicylic acid (SA), when attached to negative cis-elements (W-box) with WRKY transcription factors (e.g. WRKY70), but stimulates gene expression upon activation by SA, when sumoylated and attached to positive cis-elements (as-1) with TGA transcription factors (e.g. TGA3), thus confering immunity through a series of gene regulations ending in a significant increase in antimicrobial and defense genes expression (e.g. PR-1 and PR-2). Binds to SA with low capacity; this leads to conformational changes. Key positive regulator of the SA-dependent signaling pathway that negatively regulates jasmonic acid (JA)-dependent signaling pathway. Controls the onset of systemic acquired resistance (SAR). Upon SAR induction, a biphasic change in cellular reduction potential occurs, resulting in reduction of the cytoplasmic oligomeric form to dimeric and monomeric forms, which accumulate in the nucleus and activate gene expression. Appears to control lesion expansion by acting as an inhibitor of programmed cell death (PCD) during effector-triggered immunity (ETI) that occurs in response to incompatible interaction with avirulent pathogenic bacteria (i.e. Pseudomonas syringae ES4326/avrRpt2) ending in a hypersensitive response (HR). Phosphorylated form is target of proteasome degradation. The protein is Regulatory protein NPR1 of Arabidopsis thaliana (Mouse-ear cress).